Reading from the N-terminus, the 153-residue chain is Large ribosomal subunit protein uL22 (153 aa).

Residues 128–153 form a disordered region; that stretch reads ADRRARRAAAKPAASASPAANEGVPA. A compositionally biased stretch (low complexity) spans 137-147; the sequence is AKPAASASPAA.

It belongs to the universal ribosomal protein uL22 family. As to quaternary structure, part of the 50S ribosomal subunit.

Its function is as follows. This protein binds specifically to 23S rRNA; its binding is stimulated by other ribosomal proteins, e.g. L4, L17, and L20. It is important during the early stages of 50S assembly. It makes multiple contacts with different domains of the 23S rRNA in the assembled 50S subunit and ribosome. The globular domain of the protein is located near the polypeptide exit tunnel on the outside of the subunit, while an extended beta-hairpin is found that lines the wall of the exit tunnel in the center of the 70S ribosome. In Acidiphilium cryptum (strain JF-5), this protein is Large ribosomal subunit protein uL22.